Reading from the N-terminus, the 761-residue chain is Spindle assembly abnormal protein 4 (761 aa).

A compositionally biased stretch (acidic residues) spans 1-11 (MLPSENGDEDQ). Residues 1–109 (MLPSENGDED…SNERREEDNV (109 aa)) are disordered. A compositionally biased stretch (polar residues) spans 51 to 62 (TPTNSAPSSART). Residues 90–106 (ESHDSGNRSESNERREE) are compositionally biased toward basic and acidic residues. Residues 129–156 (ETCSKVSEEATQLRAEADRITAQANFIN) are a coiled coil. The segment covering 164–173 (TPSSYSSNIS) has biased composition (low complexity). Disordered regions lie at residues 164–228 (TPSS…QARP) and 252–280 (PRRQ…SEHV). Residues 210–223 (QTLSSLASSGSLDT) show a composition bias toward polar residues. Basic and acidic residues predominate over residues 265 to 280 (SQKENVPERKAPSEHV). Residues 326 to 464 (RKKQEEAYAK…EKDDREKEMF (139 aa)) adopt a coiled-coil conformation. The span at 479–497 (ATGSAASSRLPSVSSLASS) shows a compositional bias: low complexity. A disordered region spans residues 479 to 510 (ATGSAASSRLPSVSSLASSMKTGSTGKGRTVS).

The protein localises to the cytoplasm. It is found in the cytoskeleton. The protein resides in the microtubule organizing center. It localises to the centrosome. Required for centrosome duplication. Plays a central role in determining centrosome size. This Caenorhabditis briggsae protein is Spindle assembly abnormal protein 4 (sas-4).